A 468-amino-acid polypeptide reads, in one-letter code: Ribulose bisphosphate carboxylase large chain (468 aa).

K5 is subject to N6,N6,N6-trimethyllysine. Substrate contacts are provided by N114 and T164. K166 functions as the Proton acceptor in the catalytic mechanism. K168 is a binding site for substrate. Mg(2+)-binding residues include K192, D194, and E195. At K192 the chain carries N6-carboxylysine. H285 acts as the Proton acceptor in catalysis. Residues R286, H318, and S370 each contribute to the substrate site.

Belongs to the RuBisCO large chain family. Type I subfamily. Heterohexadecamer of 8 large chains and 8 small chains; disulfide-linked. The disulfide link is formed within the large subunit homodimers. It depends on Mg(2+) as a cofactor. In terms of processing, the disulfide bond which can form in the large chain dimeric partners within the hexadecamer appears to be associated with oxidative stress and protein turnover.

It is found in the plastid. The protein resides in the chloroplast. The enzyme catalyses 2 (2R)-3-phosphoglycerate + 2 H(+) = D-ribulose 1,5-bisphosphate + CO2 + H2O. It carries out the reaction D-ribulose 1,5-bisphosphate + O2 = 2-phosphoglycolate + (2R)-3-phosphoglycerate + 2 H(+). Its function is as follows. RuBisCO catalyzes two reactions: the carboxylation of D-ribulose 1,5-bisphosphate, the primary event in carbon dioxide fixation, as well as the oxidative fragmentation of the pentose substrate in the photorespiration process. Both reactions occur simultaneously and in competition at the same active site. The chain is Ribulose bisphosphate carboxylase large chain from Solandra grandiflora (Chalice vine).